Consider the following 75-residue polypeptide: UPF0352 protein plu2871 (75 aa).

It belongs to the UPF0352 family.

The chain is UPF0352 protein plu2871 from Photorhabdus laumondii subsp. laumondii (strain DSM 15139 / CIP 105565 / TT01) (Photorhabdus luminescens subsp. laumondii).